The following is a 1996-amino-acid chain: Non-reducing polyketide synthase atnG (1996 aa).

The interval 9–245 (FLFGDQADAP…AELPAFGAVH (237 aa)) is N-terminal acylcarrier protein transacylase (SAT) domain. Positions 366–794 (SGSVAVIGMS…GGNSCFVLEE (429 aa)) constitute a Ketosynthase family 3 (KS3) domain. Catalysis depends on for beta-ketoacyl synthase activity residues C538, H673, and H713. A malonyl-CoA:ACP transacylase (MAT) domain region spans residues 891 to 1150 (AFAFTGQGAH…VKYTQAISHC (260 aa)). S982 (for acyl/malonyl transferase activity) is an active-site residue. Positions 1263–1392 (HHLVSQDDNG…CCIRQTDEQD (130 aa)) are N-terminal hotdog fold. Residues 1263-1569 (HHLVSQDDNG…FRKMPRTTLH (307 aa)) form the PKS/mFAS DH domain. Residues 1267–1568 (SQDDNGKEQS…RFRKMPRTTL (302 aa)) form a product template (PT) domain region. Catalysis depends on H1295, which acts as the Proton acceptor; for dehydratase activity. Residues 1416 to 1569 (ASGIANRFQG…FRKMPRTTLH (154 aa)) form a C-terminal hotdog fold region. The Proton donor; for dehydratase activity role is filled by D1481. The segment at 1573–1621 (GKAVPPKPAKETSHPSVEATAPATTNGRSSATNAQAEAPAPPVNGSNGH) is disordered. Over residues 1594–1607 (PATTNGRSSATNAQ) the composition is skewed to polar residues. Residues 1620-1697 (GHRKTVESVL…DAQRQLRTLE (78 aa)) form the Carrier domain. S1657 carries the post-translational modification O-(pantetheine 4'-phosphoryl)serine. The segment at 1725–1923 (KRECNVVLMQ…ERTFVVWAKK (199 aa)) is thioesterase (TE) domain.

It functions in the pathway secondary metabolite biosynthesis; terpenoid biosynthesis. Functionally, non-reducing polyketide synthase; part of the gene cluster that mediates the biosynthesis of the meroterpenoids arthripenoids. The pathway begins with the HR-PKS atnH that catalyzes two chain-extension steps to form a reduced triketide, which then primes the SAT domain in the NR-PKS atnG to initiate three more cycles of extension to give a linear hexaketide corresponding to the polyketide part of arthripenoids. The FAD-dependent monooxygenase atnJ then performs an oxidative decarboxylation at C11 of the atnH/atnG product, via an electrophilic aromatic hydroxylation with concomitant ipso-decarboxylation. The membrane-bound polyprenyl transferase atnF then introduces a farnesyl group before the FAD-dependent monooxygenase atnK functions as the first epoxidase on terminal C12'-C13' olefin, followed by a second epoxidation on C7'-C8' catalyzed by atnA. The terpene cyclase/mutase atnI then initiates the sequential tricyclic ring formation through protonation of the terminal epoxide and catalyzes the regioselective and stereoselective 6/6/6-tricyclic ring formation. The cytochrome P450 monooxygenase atnM is responsible for hydroxylating both C1' and C10'. The next steps may involve ketoreduction and acetyl transfer by the ketoreductase atnB and the acetyltransferase atnC, and lead to the production of arthripenoid B, the final biosynthetic product of the atn cluster. The hydroquinone moiety in arthripenoid B is prone to undergo spontaneous oxidation to afford a benzoquinone compound, a key intermediate for generating structure diversity. For instance, addition of a cysteine followed by ring contraction gives arthripenoid A, tautomerization gives the main product arthripenoid C, addition of a molecular of water or amine affords arthripenoid D or E, respectively, and loss of one water forms arthripenoid F. This Arthrinium sp protein is Non-reducing polyketide synthase atnG.